The following is a 471-amino-acid chain: MEFVTALVNLQEESSCPICLEYLKDPVTINCGHNFCRSCLSVSWKDLDDTFPCPVCRFCFPYKSFRRNPQLRNLTEIAKQLQIRRSKRKRQKENAMCEKHNQFLTLFCVKDLEILCTQCSFSTKHQKHYICPIKKAASYHREILEGSLEPLRNNIERVEKVIILQGSKSVELKKKVEYKREEINSEFEQIRLFLQNEQEMILRQIQDEEMNILAKLNENLVELSDYVSTLKHLLREVEGKSVQSNLELLTQAKSMHHKYQNLKCPELFSFRLTKYGFSLPPQYSGLDRIIKPFQVDVILDLNTAHPQLLVSEDRKAVRYERKKRNICYDPRRFYVCPAVLGSQRFSSGRHYWEVEVGNKPKWILGVCQDCLLRNWQDQPSVLGGFWAIGRYMKSGYVASGPKTTQLLPVVKPSKIGIFLDYELGDLSFYNMNDRSILYTFNDCFTEAVWPYFYTGTDSEPLKICSVSDSER.

An RING-type zinc finger spans residues 16-57; that stretch reads CPICLEYLKDPVTINCGHNFCRSCLSVSWKDLDDTFPCPVCR. The B box-type zinc-finger motif lies at 92-133; that stretch reads KENAMCEKHNQFLTLFCVKDLEILCTQCSFSTKHQKHYICPI. Residues Cys97, His100, Cys119, and His125 each contribute to the Zn(2+) site. The stretch at 171 to 223 forms a coiled coil; the sequence is ELKKKVEYKREEINSEFEQIRLFLQNEQEMILRQIQDEEMNILAKLNENLVEL. The B30.2/SPRY domain maps to 277–470; sequence FSLPPQYSGL…LKICSVSDSE (194 aa).

Belongs to the TRIM/RBCC family.

In terms of biological role, E3 SUMO-protein ligase that mediates SUMOylation of TAB2 leading to inhibition of NF-kappa-B and MAPK pathways by suppressing the TRAF6/TAB2/TAK1 complex. The chain is Tripartite motif-containing protein 60 (TRIM60) from Homo sapiens (Human).